We begin with the raw amino-acid sequence, 61 residues long: UPF0312 protein (61 aa).

It belongs to the UPF0312 family.

In Delftia acidovorans (Pseudomonas acidovorans), this protein is UPF0312 protein.